Consider the following 631-residue polypeptide: Sperm-associated antigen 16 protein (631 aa).

The stretch at 152 to 267 forms a coiled coil; it reads DVYTQIMLLE…LQETLKKLQR (116 aa). The tract at residues 266-332 is disordered; sequence QRGHSYHGPQ…QPNPNLNVSK (67 aa). 2 stretches are compositionally biased toward basic and acidic residues: residues 277–287 and 295–304; these read KVDHSREKENA and GLREAREQNK. 7 WD repeats span residues 350-389, 392-431, 434-473, 476-515, 518-557, 560-600, and 601-630; these read LHEL…VLLT, GHTD…CILT, GHSR…CRCT, GHTD…CEQS, GHMH…PIVS, IGPS…HKLM, and GHEN…VRTW.

Interacts with SPAG6 and STK36. Post-translationally, phosphorylated by TSSK2. Isoform 1 is detected in testis. Isoform 4 is detected in testis and brain, and at lower levels in kidney, heart, pancreas, thyroid, ovary, adrenal gland, spinal cord, trachea and liver.

Its subcellular location is the cytoplasm. The protein localises to the cytoskeleton. It localises to the flagellum axoneme. The protein resides in the cilium axoneme. It is found in the cell projection. Its subcellular location is the cilium. The protein localises to the flagellum. Functionally, necessary for sperm flagellar function. Plays a role in motile ciliogenesis. May help to recruit STK36 to the cilium or apical surface of the cell to initiate subsequent steps of construction of the central pair apparatus of motile cilia. The sequence is that of Sperm-associated antigen 16 protein (SPAG16) from Homo sapiens (Human).